Consider the following 3432-residue polypeptide: MNYSWIHEYYLGTCIQEEKVFSIYSASTSNNSFSFPSIPTTTTHFSNSVLNQTTTTTTTTTTTTTTTNTPPPPPQSQLQAQLQSQSQQNNQHHRPLSPNGGFFSITNSSSISDQDLRSRLKLYDDQPQQQQQQQASNKSKLSQKQTSQLNISGNNSGNSTPPLPTISNSNNSINFIHSPPPTPPLLKTPILSSHNHNNNNNNNNNNNNNNNNNNNNNNNNNNNNNNNNNNNNNNNNHNINTIDIDLVSPPPPLLLPSGSLSPLSFKHGYNSGLGGNFCSNSIANGIHLGKKPSEFQSHNNNVLLKILNYKYPPIEISTIFQREYFILSYLNDLDGTLKLIKTQSEYGNIVALIFEENGYKSLTSYYNVLSLLNGVGGCASFTNYNLNYNINNSLNNLNNNNNNNNNSYNNNYNNNNNNNGQVTSPILNNTELSQSSASAFKPFQLNSSTNSTGSPLIITSQPMPFQLNSNSNTTASSSSPITHSNLNTAITSTTTSNSNSNNNSNNNNSGGGGGGGGGGGGGGGTKINNKRRASLTPTSTPLSASPLLFNTKKYADIDINTFLSIAIQLTTILESIHGKGCIHRDIRPNNIYINSECKVKLANFQFSIFKKTSSFLKKSKFQQQHQQSENNNNNTLDSDITMIDNIDLTNSYNNNNNSSTNNIFFNFNNDYDEESINELFKSYPDLSRFSTSTYYYISPEDTGRTIHPVDEKSDLYSLGVTFFELLTGRLPFQSSDLSELIHSHLAKKPPLVIDLNQNVPLILSNIVNKLLQKSPDDRYQSAYGLKKDLEMFKLQLSIINNNNNNNNNNNNNNNNNLSNQQITDFKLGAYDVLNRPYISNELYSRKKELNSILTTIKRVSKGGKEFIIVSGLSGVGKTSLINQACKKSNTKVRFICGKFDQFNKSPYSAIIEALSQLVNLILSLSPLELEFYKDRLLRTLGSNISVITEVIPKLCLIVGTHYKVLPLPSSESQNRFDLAFKDFLRVFAEEGNPLVLFLDDFQRADPSSYRLIKLLMESNNSTSNNSTFLNCNGNNNNNNNNFSINNNNNNNNGCNNNNNNNNNNINNNNNNNNNNNINNSGGSLNYLLVIGAFRENEPNFELDFGDLSNFITMKIVLKNLDLKYVNLMVSTTLHASPQETLSLSQVVLSKTHGNAFFVILFLRTLFDESLVYFSTTTDKWCWNIEKIQKREFTDNVVEFMVENLKQLDKQAQRVLHLASCIGNSFDLDMLAFVAELSPEQCLKIMAEIISRDLIVITQQPTTTTNNNTTNNTNNNNTNNNNNNTNGNNSDINQTNLIRYHFVHDRIQQAAFNLVLLKDEKKQIHLNIGRILYKKYYVQSNNNSSNNNNNNNNNNNINIFEILNQYNFGIELIKDQDERLNLSKLNFEAGCKANSSTAFNYGNQYFQIALNLLFGESEQGEDDDLVWNEHYQMLFNIYLEKSQSEFMVGNCQESDRLLEKALQRAKKDEHIGEVTARRVKQYTLQLRFDDCIEMSIEFLKRQGIFLDINLSMDTLTKDYQKFKNRLNGQPISTIMNKLVGGGGGGSGSSNNSNNGSVVSPLVDCCLRVMVIMMPSLYLNNLNVLTLLLMKFVEYTLENGISSWSSTAFAMFGMVVSIGHFCDYSVGYQFGQYAMSLKEKYSEQPGTKGMVTLLYSGYIHHLGNHLSTSIPIVKQAFLESIEYGDFGCACYASVNLILHRILLGLPLDETYQLSKQYSNYIEQYYFKPMYQIVVSLQNFILELTGTDLLPEQQQPQQQTPNNSNSSCGSNCSSGGNSNNSNLNCSSGSSFASGSNYNNININNNNNNNNNNNNNNNNNNYNAEWDIEEFENDLLSTPDVHCPIAYHFISKCQTCYLFGDFESAWQAVLRGENSIIGIFAHTHLFSVLYLFKSLIIMKNLGNQHNNNNNNNSNHIYKTYGIENENNNDSNNNNYNFKIYSLEEEIKMAKDCIEKLESYSEQSYENFSSQLMLAKAEFERINGNFEQAMEYFSEAISLAQQFKYQQYEALANELSSRMYIQIKKFAVAKAYLIESHQCYKSWGALRKANQLELEFPNLLNFNRLNVQTKRSKRFEYSNNNNNNNSNNNNNNANQSQASISLSSSTSFNSKIIGNSSNSSNNNFNNNNNNNNNNNNLMAISSSSSICSSGSGSYGSSNGISGTTQLNSNYNSNFFEPSLSIRRRSQDGTVSTKNLSRYPVDAVDLCSVIKVSHSLAEEIYFDRLLKRLMKVVIKNAGASRGFLLLIEDKITKELFINPTSKTNITLLGDLSVAASALVNNEKVIVEVFINNNINNNNININSSGYNNTNKNDNNNNNNYSPAYNNNNNNNNNNNNNNNNNNNNNNNNNNNNNNKKQINEIIKNDSFNEEDGTWNMCLSMINYVKRTLTPLLITNAIQDNTFSEDPYVKKRNPKSILVLPIVYQGNLVSILYLENNFSTGIFSNEKLEILNLISSQIAISFSNARLFIKVNQLANQAFLAKEEAEKANKAKSDFISNMSHEMRTPLNHIIGSIELLKSYNHLFNSDQKELLDISAKSSESLLFMVNNILDLSKVEQGKTKLNLTNFNLVSFLEDSICAISPNAHLKGVYIALFINPCLSKIPVIGDINILRQVIVNLLTNAIKFTESGQVYIKLNLSINNNPTTTNNKKQLNTDNDGDDDDDDDNENLDENNEDTSIDLDDNGKVIYQKNPKSNQCYIVNIEVVDSGIGIKNEDFGKLFQRFSQIECGSNRAYDGTGLGLSIVKDLVCNLMKGDIGVKSKVGVGSTFHFCVELGKSFDESMSNKYHLPLELLNNNNNNNNNNNNNNNNNNNNNNNNNNNNNNINCSNGGSVNINSSGNSVFSCSSSNSGTRVTILEENKIICDQLSMLCVSNGLNDLTVLNDIFSLELLADCLDCYKPPIQSPRFGSTSSSLVLLSPRSTLNLSPKIISPRPYPNNQNNFLSSSPQMLSPLPNSPLSSSQQHQNNNNINNNNINNNNNNNNNNNNNNNNNNNNNNNNNNNNNNNNNNNNNNNGVGLSINLSNLNNHNHNNSHNNNSQQIQYQNSKEIFIIGLPFSYNEDKILTLVENIKSLTYSASFNKRGNISISSNVNKVEFILVTHILLSANSREILNNSNIYIVNRPIKMKTLHKTFLKIFENNNNNNINNINNNNNKSNSPIPEDSKHSQYKYQKQLSESNICYTKKPISPSPSSATVILEQQQDHNLQSPTAITTNLISEEYDHFDSNSTPPPNTATTTTTTTTLANSALANSTLANSISTTSHSSTSTSSSSSSSSSSSSSLSSTTTITTTTTTTSNLDKMLIDKKITSTQELKILIVEDNEMNANIMFKMLAKLGIQCEPHLALNGLEGVKKAKNEEYDLIIMDIQMPVMCGLTATSLIRKHEGTKKRTPIVAITASAMNGEMSKALAAGCDDYLSKPLQLKDLRYVINRYGPITLEYNS.

Composition is skewed to low complexity over residues 44–68, 76–90, and 126–145; these read HFSNSVLNQTTTTTTTTTTTTTTTN, SQLQAQLQSQSQQNN, and QPQQQQQQQASNKSKLSQKQ. Disordered stretches follow at residues 44-109 and 124-240; these read HFSN…TNSS and DDQP…HNIN. Residues 146-157 show a composition bias toward polar residues; that stretch reads TSQLNISGNNSG. Low complexity-rich tracts occupy residues 165–177 and 187–238; these read TISNSNNSINFIH and KTPI…NNHN. The Protein kinase domain occupies 263–792; the sequence is LSFKHGYNSG…YGLKKDLEMF (530 aa). Residues 269-277 and Lys-305 each bind ATP; that span reads YNSGLGGNF. Low complexity predominate over residues 399–419; it reads NNNNNNNNSYNNNYNNNNNNN. Disordered regions lie at residues 399–426 and 443–542; these read NNNNNNNNSYNNNYNNNNNNNGQVTSPI and FQLN…STPL. Positions 443–467 are enriched in polar residues; it reads FQLNSSTNSTGSPLIITSQPMPFQL. Residues 468 to 479 show a composition bias toward low complexity; it reads NSNSNTTASSSS. Polar residues predominate over residues 480 to 490; sequence PITHSNLNTAI. A compositionally biased stretch (low complexity) spans 491–508; it reads TSTTTSNSNSNNNSNNNN. Residues 509–525 are compositionally biased toward gly residues; that stretch reads SGGGGGGGGGGGGGGGT. Asp-585 serves as the catalytic Proton acceptor; for protein kinase activity. Residues 863–1121 form an AAA region; the sequence is GKEFIIVSGL…TMKIVLKNLD (259 aa). 871 to 878 contributes to the ATP binding site; that stretch reads GLSGVGKT. Disordered stretches follow at residues 1040–1077 and 1261–1290; these read NNFSINNNNNNNNGCNNNNNNNNNNINNNNNNNNNNNI and TTTTNNNTTNNTNNNNTNNNNNNTNGNNSD. Residues 1261 to 1288 are compositionally biased toward low complexity; it reads TTTTNNNTTNNTNNNNTNNNNNNTNGNN. A run of 2 helical transmembrane segments spans residues 1567–1587 and 1599–1619; these read VMVIMMPSLYLNNLNVLTLLL and ISSWSSTAFAMFGMVVSIGHF. One copy of the TPR repeat lies at 1965–1998; that stretch reads SQLMLAKAEFERINGNFEQAMEYFSEAISLAQQF. 2 disordered regions span residues 2071–2095 and 2299–2349; these read EYSNNNNNNNSNNNNNNANQSQASI and GYNN…NNNK. Residues 2073-2095 show a composition bias toward low complexity; the sequence is SNNNNNNNSNNNNNNANQSQASI. One can recognise a GAF domain in the interval 2215 to 2465; it reads YFDRLLKRLM…SNARLFIKVN (251 aa). One can recognise a Histidine kinase domain in the interval 2491 to 2769; the sequence is NMSHEMRTPL…TFHFCVELGK (279 aa). A Phosphohistidine; by autocatalysis modification is found at His-2494. The span at 2637 to 2648 shows a compositional bias: low complexity; the sequence is TTTNNKKQLNTD. Disordered regions lie at residues 2637-2673, 2785-2815, 2917-3030, 3134-3160, and 3247-3281; these read TTTNNKKQLNTDNDGDDDDDDDNENLDENNEDTSIDL, LLNNNNNNNNNNNNNNNNNNNNNNNNNNNNN, LSPK…NNNS, NNNINNINNNNNKSNSPIPEDSKHSQY, and NSISTTSHSSTSTSSSSSSSSSSSSSLSSTTTITT. Acidic residues predominate over residues 2649 to 2673; the sequence is NDGDDDDDDDNENLDENNEDTSIDL. Low complexity-rich tracts occupy residues 2787-2815, 2935-3029, and 3134-3145; these read NNNNNNNNNNNNNNNNNNNNNNNNNNNNN, LSSS…HNNN, and NNNINNINNNNN. The Response regulatory domain maps to 3305–3424; the sequence is KILIVEDNEM…DLRYVINRYG (120 aa). 4-aspartylphosphate is present on Asp-3356.

Belongs to the protein kinase superfamily. Ser/Thr protein kinase family. In terms of processing, activation probably requires transfer of a phosphate group between a histidine in the kinase core (transmitter) domain and an aspartate of the receiver domain.

The protein resides in the membrane. It catalyses the reaction ATP + protein L-histidine = ADP + protein N-phospho-L-histidine.. The enzyme catalyses L-seryl-[protein] + ATP = O-phospho-L-seryl-[protein] + ADP + H(+). It carries out the reaction L-threonyl-[protein] + ATP = O-phospho-L-threonyl-[protein] + ADP + H(+). Acts as a receptor histidine kinase for a signal transduction pathway. This protein undergoes an ATP-dependent autophosphorylation at a conserved histidine residue in the kinase core, and a phosphoryl group is then transferred to a conserved aspartate residue in the receiver domain. The polypeptide is Hybrid signal transduction histidine kinase G (dhkG) (Dictyostelium discoideum (Social amoeba)).